The sequence spans 533 residues: Probable protein kinase UbiB (533 aa).

A helical membrane pass occupies residues 24 to 44 (LILELPMLPWWLRLLGAALPW). In terms of domain architecture, Protein kinase spans 126-494 (RFEREPLASA…WKSSRHDWLG (369 aa)). ATP contacts are provided by residues 132–140 (LASASVAQV) and Lys-154. The active-site Proton acceptor is the Asp-289. A helical membrane pass occupies residues 510 to 530 (LGQQLEAWPAWVMLAGGVFLI).

This sequence belongs to the ABC1 family. UbiB subfamily.

Its subcellular location is the cell inner membrane. It functions in the pathway cofactor biosynthesis; ubiquinone biosynthesis [regulation]. Functionally, is probably a protein kinase regulator of UbiI activity which is involved in aerobic coenzyme Q (ubiquinone) biosynthesis. The protein is Probable protein kinase UbiB of Pseudomonas paraeruginosa (strain DSM 24068 / PA7) (Pseudomonas aeruginosa (strain PA7)).